We begin with the raw amino-acid sequence, 472 residues long: D-inositol 3-phosphate glycosyltransferase (472 aa).

Residue H48 coordinates 1D-myo-inositol 3-phosphate. UDP-N-acetyl-alpha-D-glucosamine contacts are provided by residues 54-55 (QP) and G62. Residues 59 to 64 (DAGGMN), K117, Y150, T174, and R194 each bind 1D-myo-inositol 3-phosphate. UDP-N-acetyl-alpha-D-glucosamine is bound by residues R282, K287, and V348. F357, R358, and A360 together coordinate Mg(2+). 2 residues coordinate UDP-N-acetyl-alpha-D-glucosamine: E370 and E378. Mg(2+) is bound at residue T384.

Belongs to the glycosyltransferase group 1 family. MshA subfamily. In terms of assembly, homodimer.

The catalysed reaction is 1D-myo-inositol 3-phosphate + UDP-N-acetyl-alpha-D-glucosamine = 1D-myo-inositol 2-acetamido-2-deoxy-alpha-D-glucopyranoside 3-phosphate + UDP + H(+). Catalyzes the transfer of a N-acetyl-glucosamine moiety to 1D-myo-inositol 3-phosphate to produce 1D-myo-inositol 2-acetamido-2-deoxy-glucopyranoside 3-phosphate in the mycothiol biosynthesis pathway. In Streptomyces griseus subsp. griseus (strain JCM 4626 / CBS 651.72 / NBRC 13350 / KCC S-0626 / ISP 5235), this protein is D-inositol 3-phosphate glycosyltransferase.